The chain runs to 104 residues: Signal recognition particle 19 kDa protein (104 aa).

It belongs to the SRP19 family. As to quaternary structure, part of the signal recognition particle protein translocation system, which is composed of SRP and FtsY. Archaeal SRP consists of a 7S RNA molecule of 300 nucleotides and two protein subunits: SRP54 and SRP19.

Its subcellular location is the cytoplasm. Involved in targeting and insertion of nascent membrane proteins into the cytoplasmic membrane. Binds directly to 7S RNA and mediates binding of the 54 kDa subunit of the SRP. In Archaeoglobus fulgidus (strain ATCC 49558 / DSM 4304 / JCM 9628 / NBRC 100126 / VC-16), this protein is Signal recognition particle 19 kDa protein.